Consider the following 304-residue polypeptide: tRNA-5-methyluridine(54) 2-sulfurtransferase (304 aa).

4 residues coordinate Zn(2+): Cys-3, Cys-6, Cys-22, and His-25. ATP-binding residues include Ala-53 and Ile-79. Residues Cys-131 and Cys-134 each coordinate [4Fe-4S] cluster. Residues Arg-138 and Gly-157 each contribute to the ATP site. Cys-224 lines the [4Fe-4S] cluster pocket. The Zn(2+) site is built by Cys-274, Cys-277, Cys-286, and Cys-289.

It belongs to the TtcA family. TtuA subfamily. Homodimer. The cofactor is [4Fe-4S] cluster. Requires Mg(2+) as cofactor.

It carries out the reaction 5-methyluridine(54) in tRNA + hydrogen sulfide + ATP = 5-methyl-2-thiouridine(54) in tRNA + AMP + diphosphate. Its pathway is tRNA modification. Functionally, catalyzes the ATP-dependent 2-thiolation of 5-methyluridine residue at position 54 in the T loop of tRNAs, leading to 5-methyl-2-thiouridine (m(5)s(2)U or s(2)T). This modification allows thermal stabilization of tRNAs in thermophilic microorganisms, and is required for cell growth at high temperatures. Can use free sulfide as sulfur source in vitro. This chain is tRNA-5-methyluridine(54) 2-sulfurtransferase, found in Thermotoga maritima (strain ATCC 43589 / DSM 3109 / JCM 10099 / NBRC 100826 / MSB8).